Here is a 187-residue protein sequence, read N- to C-terminus: UPF0200 protein MM_1313 (187 aa).

9–16 contacts ATP; the sequence is GMPASGKS.

This sequence belongs to the UPF0200 family.

The protein is UPF0200 protein MM_1313 of Methanosarcina mazei (strain ATCC BAA-159 / DSM 3647 / Goe1 / Go1 / JCM 11833 / OCM 88) (Methanosarcina frisia).